The chain runs to 113 residues: Ribonuclease P protein component (113 aa).

This sequence belongs to the RnpA family. Consists of a catalytic RNA component (M1 or rnpB) and a protein subunit.

It catalyses the reaction Endonucleolytic cleavage of RNA, removing 5'-extranucleotides from tRNA precursor.. In terms of biological role, RNaseP catalyzes the removal of the 5'-leader sequence from pre-tRNA to produce the mature 5'-terminus. It can also cleave other RNA substrates such as 4.5S RNA. The protein component plays an auxiliary but essential role in vivo by binding to the 5'-leader sequence and broadening the substrate specificity of the ribozyme. The protein is Ribonuclease P protein component of Vesicomyosocius okutanii subsp. Calyptogena okutanii (strain HA).